Here is a 294-residue protein sequence, read N- to C-terminus: MNTTALLIGLGPLLGWGLYPTIASKIGGRPVNQILGSTIGTLIFALIYAWVQGIAFPSGMNLWFSILSGIGWASAQIVTFKVFTMVGSSRAMPITTAFQLLGASLWGVFALGDWPGAMDKVLGGLALVGIIIGAWLTVWSEHKDAGNARTLRQAVIWLAVGEIGYWAYSAAPQATNIGGEEAFVPQAIGMVIVSIVYALFLASRGEKLALVEGVSYTHIISGFFFAFAALTYLISAQPNMNGLATGFILSQTSVVLATLTGIWFLGQKKTTKEMWVTIGGLILIIAAAAVTVTI.

10 helical membrane passes run 5–24 (ALLI…TIAS), 34–56 (ILGS…GIAF), 61–80 (NLWF…IVTF), 90–112 (RAMP…FALG), 121–138 (VLGG…WLTV), 153–170 (QAVI…AYSA), 182–204 (AFVP…LASR), 214–236 (VSYT…LISA), 243–265 (LATG…IWFL), and 275–292 (WVTI…AVTV).

It belongs to the GRP transporter (TC 2.A.7.5) family.

It localises to the cell membrane. In terms of biological role, could be involved in the uptake of ribose. In Lactiplantibacillus plantarum (strain ATCC BAA-793 / NCIMB 8826 / WCFS1) (Lactobacillus plantarum), this protein is Putative ribose uptake protein RbsU (rbsU).